The following is a 120-amino-acid chain: V-type proton ATPase subunit F (120 aa).

Belongs to the V-ATPase F subunit family. In terms of assembly, V-ATPase is a heteromultimeric enzyme composed of a peripheral catalytic V1 complex (components A to H) attached to an integral membrane V0 proton pore complex (components: a, c, c', c'', d, e, f and VOA1).

Its subcellular location is the vacuole membrane. In terms of biological role, subunit of the V1 complex of vacuolar(H+)-ATPase (V-ATPase), a multisubunit enzyme composed of a peripheral complex (V1) that hydrolyzes ATP and a membrane integral complex (V0) that translocates protons. V-ATPase is responsible for acidifying and maintaining the pH of intracellular compartments. The polypeptide is V-type proton ATPase subunit F (Schizosaccharomyces pombe (strain 972 / ATCC 24843) (Fission yeast)).